Here is a 264-residue protein sequence, read N- to C-terminus: tRNA pseudouridine synthase A (264 aa).

Asp51 serves as the catalytic Nucleophile. Tyr109 lines the substrate pocket.

The protein belongs to the tRNA pseudouridine synthase TruA family. As to quaternary structure, homodimer.

The catalysed reaction is uridine(38/39/40) in tRNA = pseudouridine(38/39/40) in tRNA. In terms of biological role, formation of pseudouridine at positions 38, 39 and 40 in the anticodon stem and loop of transfer RNAs. This Staphylococcus aureus (strain MRSA252) protein is tRNA pseudouridine synthase A.